Consider the following 206-residue polypeptide: MVHYKLVYFPLRARAEIARQIFAYAGQDYSEENLSFEQWPARKNNTPFGQLPILEVDGKPLGQSYAIARYLAREFGIAGQNDTEAAEVDAIADQFKDYLNDVSPYLTVLAGFKPGDKDQLRTDVFVPAFKKNFEFFENILASNHSGFFVGNSLTWVDLLISQHVQDILDKDLAVVEEFKKVLAHRKKVQSIDRIQKYIANRPDYPF.

Positions 2–79 constitute a GST N-terminal domain; it reads VHYKLVYFPL…YLAREFGIAG (78 aa). Glutathione contacts are provided by residues tyrosine 8, tryptophan 39, lysine 43, 49-51, and 63-64; these read GQL and QS. Residues 81–206 enclose the GST C-terminal domain; the sequence is NDTEAAEVDA…YIANRPDYPF (126 aa).

Belongs to the GST superfamily. Sigma family.

The catalysed reaction is RX + glutathione = an S-substituted glutathione + a halide anion + H(+). Conjugation of reduced glutathione to a wide number of exogenous and endogenous hydrophobic electrophiles. This chain is Probable glutathione S-transferase 6 (gst-6), found in Caenorhabditis elegans.